Reading from the N-terminus, the 344-residue chain is Geranylgeranyl pyrophosphate synthase 10, mitochondrial (344 aa).

The N-terminal 40 residues, 1-40 (MENREVFVYIVISIFRSLQFLFWRFRPRYNDVTSALTRPL), are a transit peptide targeting the mitochondrion. 3 residues coordinate isopentenyl diphosphate: lysine 91, arginine 94, and histidine 123. Residues aspartate 130 and aspartate 136 each contribute to the Mg(2+) site. Arginine 141 is a binding site for dimethylallyl diphosphate. Residue arginine 142 participates in isopentenyl diphosphate binding. Dimethylallyl diphosphate is bound by residues lysine 229, threonine 230, glutamine 267, lysine 284, and lysine 294.

This sequence belongs to the FPP/GGPP synthase family. Monomer. Requires Mg(2+) as cofactor.

It is found in the mitochondrion. The catalysed reaction is isopentenyl diphosphate + dimethylallyl diphosphate = (2E)-geranyl diphosphate + diphosphate. It carries out the reaction isopentenyl diphosphate + (2E)-geranyl diphosphate = (2E,6E)-farnesyl diphosphate + diphosphate. It catalyses the reaction isopentenyl diphosphate + (2E,6E)-farnesyl diphosphate = (2E,6E,10E)-geranylgeranyl diphosphate + diphosphate. It participates in isoprenoid biosynthesis; farnesyl diphosphate biosynthesis; farnesyl diphosphate from geranyl diphosphate and isopentenyl diphosphate: step 1/1. Its pathway is isoprenoid biosynthesis; geranyl diphosphate biosynthesis; geranyl diphosphate from dimethylallyl diphosphate and isopentenyl diphosphate: step 1/1. The protein operates within isoprenoid biosynthesis; geranylgeranyl diphosphate biosynthesis; geranylgeranyl diphosphate from farnesyl diphosphate and isopentenyl diphosphate: step 1/1. Catalyzes the trans-addition of the three molecules of IPP onto DMAPP to form geranylgeranyl pyrophosphate. The chain is Geranylgeranyl pyrophosphate synthase 10, mitochondrial from Arabidopsis thaliana (Mouse-ear cress).